We begin with the raw amino-acid sequence, 201 residues long: Imidazoleglycerol-phosphate dehydratase (201 aa).

The protein belongs to the imidazoleglycerol-phosphate dehydratase family.

Its subcellular location is the cytoplasm. It carries out the reaction D-erythro-1-(imidazol-4-yl)glycerol 3-phosphate = 3-(imidazol-4-yl)-2-oxopropyl phosphate + H2O. Its pathway is amino-acid biosynthesis; L-histidine biosynthesis; L-histidine from 5-phospho-alpha-D-ribose 1-diphosphate: step 6/9. In Prochlorococcus marinus subsp. pastoris (strain CCMP1986 / NIES-2087 / MED4), this protein is Imidazoleglycerol-phosphate dehydratase.